The primary structure comprises 111 residues: Large ribosomal subunit protein uL24 (111 aa).

A disordered region spans residues 85 to 111 (NTNDPRRKDIINRKASRQKEEQGGKAQ). The segment covering 88-111 (DPRRKDIINRKASRQKEEQGGKAQ) has biased composition (basic and acidic residues).

This sequence belongs to the universal ribosomal protein uL24 family. In terms of assembly, part of the 50S ribosomal subunit.

Functionally, one of two assembly initiator proteins, it binds directly to the 5'-end of the 23S rRNA, where it nucleates assembly of the 50S subunit. Located at the polypeptide exit tunnel on the outside of the subunit. The chain is Large ribosomal subunit protein uL24 from Metallosphaera sedula (strain ATCC 51363 / DSM 5348 / JCM 9185 / NBRC 15509 / TH2).